Consider the following 361-residue polypeptide: MAGNSIGQHFRVTTFGESHGIALGCIVDGCPPGLEISEADLQTDLDRRRPGTSRYTTQRREPDEVKILSGVFEGKTTGTSIGLLIENTDQRSKDYSDIKDKFRPGHADYTYHQKYGIRDYRGGGRSSARETAMRVAAGAIAKKYLKQEFGVEIRAYLSQMGDVAIDKVDWNEIENNPFFCPDVDKVEAFDQLIRDLKKEGDSIGAKIQVVATNVPVGLGEPVFDRLDADIAHALMSINAVKGVEIGDGFDVVSQKGSQHRDTLSPQGFGSNHAGGILGGISTGQDIVANIALKPTSSITVPGDTINVDGESTQLITKGRHDPCVGIRAVPIAEAMLAIVVMDHLLRHRGQNHGVSTQTPKI.

NADP(+) contacts are provided by Arg-48 and Arg-54. FMN-binding positions include 125–127 (RSS), 238–239 (NA), Gly-278, 293–297 (KPTSS), and Arg-319.

The protein belongs to the chorismate synthase family. As to quaternary structure, homotetramer. The cofactor is FMNH2.

It carries out the reaction 5-O-(1-carboxyvinyl)-3-phosphoshikimate = chorismate + phosphate. Its pathway is metabolic intermediate biosynthesis; chorismate biosynthesis; chorismate from D-erythrose 4-phosphate and phosphoenolpyruvate: step 7/7. Functionally, catalyzes the anti-1,4-elimination of the C-3 phosphate and the C-6 proR hydrogen from 5-enolpyruvylshikimate-3-phosphate (EPSP) to yield chorismate, which is the branch point compound that serves as the starting substrate for the three terminal pathways of aromatic amino acid biosynthesis. This reaction introduces a second double bond into the aromatic ring system. The protein is Chorismate synthase of Vibrio vulnificus (strain YJ016).